The chain runs to 354 residues: Methionine import ATP-binding protein MetN (354 aa).

Residues 8 to 250 (LDHIDITFRQ…PKEALTQEFI (243 aa)) enclose the ABC transporter domain. An ATP-binding site is contributed by 42–49 (GYSGAGKS).

It belongs to the ABC transporter superfamily. Methionine importer (TC 3.A.1.24) family. As to quaternary structure, the complex is composed of two ATP-binding proteins (MetN), two transmembrane proteins (MetI) and a solute-binding protein (MetQ).

The protein localises to the cell membrane. The enzyme catalyses L-methionine(out) + ATP + H2O = L-methionine(in) + ADP + phosphate + H(+). The catalysed reaction is D-methionine(out) + ATP + H2O = D-methionine(in) + ADP + phosphate + H(+). Its function is as follows. Part of the ABC transporter complex MetNIQ involved in methionine import. Responsible for energy coupling to the transport system. The chain is Methionine import ATP-binding protein MetN from Streptococcus pyogenes serotype M3 (strain ATCC BAA-595 / MGAS315).